Reading from the N-terminus, the 176-residue chain is Ribosome maturation factor RimM (176 aa).

The PRC barrel domain occupies 100–173 (KDEYHYHDLI…WLLINPPPGL (74 aa)).

It belongs to the RimM family. In terms of assembly, binds ribosomal protein uS19.

It is found in the cytoplasm. Functionally, an accessory protein needed during the final step in the assembly of 30S ribosomal subunit, possibly for assembly of the head region. Essential for efficient processing of 16S rRNA. May be needed both before and after RbfA during the maturation of 16S rRNA. It has affinity for free ribosomal 30S subunits but not for 70S ribosomes. This chain is Ribosome maturation factor RimM, found in Prochlorococcus marinus (strain NATL1A).